Consider the following 84-residue polypeptide: Small ribosomal subunit protein bS18B (84 aa).

The span at 1-10 (MAVKRAPSKK) shows a compositional bias: basic residues. A disordered region spans residues 1–20 (MAVKRAPSKKVRAEQARRPK).

The protein belongs to the bacterial ribosomal protein bS18 family. As to quaternary structure, part of the 30S ribosomal subunit. Forms a tight heterodimer with protein bS6.

Functionally, binds as a heterodimer with protein bS6 to the central domain of the 16S rRNA, where it helps stabilize the platform of the 30S subunit. This is Small ribosomal subunit protein bS18B from Nocardia farcinica (strain IFM 10152).